We begin with the raw amino-acid sequence, 508 residues long: MFS-type transporter penM (508 aa).

The segment at 1–60 (MKDGEETPSVDGSTSASNREKLGTDLEIGPVDLSDGGKEEKVKDPNLVDWDGPDDPENPL) is disordered. Residues 35–46 (DGGKEEKVKDPN) show a composition bias toward basic and acidic residues. Asn-61 carries N-linked (GlcNAc...) asparagine glycosylation. Residues 73 to 93 (SIALITFLTPLGSSMFAPGVG) traverse the membrane as a helical segment. N-linked (GlcNAc...) asparagine glycosylation occurs at Asn-100. The next 6 helical transmembrane spans lie at 108–128 (SFVVSVYLLGYCFGPLIIAPL), 143–163 (ILYVIWTIACAFAPEIGSLVV), 166–186 (FFAGLAGSCPLTIGAGSIADM), 197–217 (AAWALGPLIGPVVGPVAGAYL), 225–245 (WSFYVLAMAAGAITISSLFSI), and 299–319 (PIVFLLSLYVGVIYGYLYLLF). The Peroxisomal targeting signal signature appears at 293–307 (KMLFRSPIVFLLSLY). Asn-331 carries an N-linked (GlcNAc...) asparagine glycan. The next 5 helical transmembrane spans lie at 335 to 355 (GAVGLTYLGLGVGSLIGLFLI), 379 to 399 (LPPMVPGAIFVPISLFMYGWT), 407 to 427 (IVPIIGTSFLGTGMMITFMCV), 435 to 457 (FTNYAASVMAANTVFRSLAGALL), and 475 to 495 (SLLGFIALAFCALPVIFWIYG).

The protein belongs to the major facilitator superfamily.

Its subcellular location is the peroxisome membrane. In terms of biological role, MFS-type transporter involved in penicillin production, most likely through the translocation of isopenicillin N from the cytosol to the peroxisomal lumen across the peroxisomal membrane. This is MFS-type transporter penM from Penicillium rubens (strain ATCC 28089 / DSM 1075 / NRRL 1951 / Wisconsin 54-1255) (Penicillium chrysogenum).